Here is a 581-residue protein sequence, read N- to C-terminus: Proline--tRNA ligase (581 aa).

Belongs to the class-II aminoacyl-tRNA synthetase family. ProS type 1 subfamily. As to quaternary structure, homodimer.

The protein resides in the cytoplasm. The catalysed reaction is tRNA(Pro) + L-proline + ATP = L-prolyl-tRNA(Pro) + AMP + diphosphate. In terms of biological role, catalyzes the attachment of proline to tRNA(Pro) in a two-step reaction: proline is first activated by ATP to form Pro-AMP and then transferred to the acceptor end of tRNA(Pro). As ProRS can inadvertently accommodate and process non-cognate amino acids such as alanine and cysteine, to avoid such errors it has two additional distinct editing activities against alanine. One activity is designated as 'pretransfer' editing and involves the tRNA(Pro)-independent hydrolysis of activated Ala-AMP. The other activity is designated 'posttransfer' editing and involves deacylation of mischarged Ala-tRNA(Pro). The misacylated Cys-tRNA(Pro) is not edited by ProRS. In Methylibium petroleiphilum (strain ATCC BAA-1232 / LMG 22953 / PM1), this protein is Proline--tRNA ligase.